The primary structure comprises 1036 residues: uncharacterized protein (1036 aa).

Positions 1-24 (MKRVGLIGVIMAALLVISATPVMA) are cleaved as a signal peptide. The chain crosses the membrane as a helical span at residues 1011–1033 (GGGVPGFEAVFAIAGLLAVAYLL).

It localises to the membrane. This is an uncharacterized protein from Archaeoglobus fulgidus (strain ATCC 49558 / DSM 4304 / JCM 9628 / NBRC 100126 / VC-16).